The following is a 566-amino-acid chain: MAATTSFSSSLSLITKPNNSSYTNQPLPLFPKPFLKPPHLSLLPSPLSSPPPSLIHGVSSYFSSPSPSEDNSHTPFDYHNDEDDEKPREECGVVGIYGDPEASRLCYLALHALQHRGQEGAGIVTVSPEKVLQTITGVGLVSEVFNESKLDQLPGEFAIGHVRYSTAGASMLKNVQPFVAGYRFGSIGVAHNGNLVNYKTLRAMLEENGSIFNTSSDTEVVLHLIAISKARPFFMRIIDACEKLQGAYSMVFVTEDKLVAVRDPYGFRPLVMGRRSNGAVVFASETCALDLIEATYEREVYPGEVLVVDKDGVKSQCLMPKFEPKQCIFEHIYFSLPNSIVFGRSVYESRHVFGEILATESPVECDVVIAVPDSGVVAALGYAAKSGVPFQQGLIRSHYVGRTFIEPSQKIRDFGVKLKLSPVRGVLEGKRVVVVDDSIVRGTTSSKIVRLLREAGAKEVHMRIASPPIVASCYYGVDTPSSEELISNRLSVEEINEFIGSDSLAFLSFDTLKKHLGKDSKSFCYACFTGDYPVKPTEVKVKRGGGDFIDDGLVGSFENIEAGWVR.

Positions 1–13 (MAATTSFSSSLSL) are enriched in low complexity. 2 disordered regions span residues 1–28 (MAAT…QPLP) and 58–87 (VSSY…DEKP). Residues 1–58 (MAATTSFSSSLSLITKPNNSSYTNQPLPLFPKPFLKPPHLSLLPSPLSSPPPSLIHGV) constitute a chloroplast transit peptide. Residues 15–25 (TKPNNSSYTNQ) show a composition bias toward polar residues. The segment covering 59-68 (SSYFSSPSPS) has biased composition (low complexity). Basic and acidic residues predominate over residues 70 to 87 (DNSHTPFDYHNDEDDEKP). Cys91 acts as the Nucleophile in catalysis. Residues 91 to 311 (CGVVGIYGDP…PGEVLVVDKD (221 aa)) form the Glutamine amidotransferase type-2 domain. Residues Cys327, Cys473, Cys524, and Cys527 each contribute to the [4Fe-4S] cluster site.

The protein in the C-terminal section; belongs to the purine/pyrimidine phosphoribosyltransferase family. Requires [4Fe-4S] cluster as cofactor. Mg(2+) is required as a cofactor. Expressed in flowers and roots. Also present in leaves, and, to a lower extent, in cotyledons.

It localises to the plastid. It is found in the chloroplast stroma. The catalysed reaction is 5-phospho-beta-D-ribosylamine + L-glutamate + diphosphate = 5-phospho-alpha-D-ribose 1-diphosphate + L-glutamine + H2O. Its pathway is purine metabolism; IMP biosynthesis via de novo pathway; N(1)-(5-phospho-D-ribosyl)glycinamide from 5-phospho-alpha-D-ribose 1-diphosphate: step 1/2. Catalyzes the first committed step of 'de novo' purine biosynthesis from glutamine. Involved in plastid biogenesis and cell division. This is Amidophosphoribosyltransferase 1, chloroplastic (ASE1) from Arabidopsis thaliana (Mouse-ear cress).